Consider the following 967-residue polypeptide: MQRAVPEGFGRRKLGSDMGNAERAPGSRSFGPVPTLLLLAAALLAVSDALGRPSEEDEELVVPELERAPGHGTTRLRLHAFDQQLDLELRPDSSFLAPGFTLQNVGRKSGSETPLPETDLAHCFYSGTVNGDPSSAAALSLCEGVRGAFYLLGEAYFIQPLPAASERLATAAPGEKPPAPLQFHLLRRNRQGDVGGTCGVVDDEPRPTGKAETEDEDEGTEGEDEGAQWSPQDPALQGVGQPTGTGSIRKKRFVSSHRYVETMLVADQSMAEFHGSGLKHYLLTLFSVAARLYKHPSIRNSVSLVVVKILVIHDEQKGPEVTSNAALTLRNFCNWQKQHNPPSDRDAEHYDTAILFTRQDLCGSQTCDTLGMADVGTVCDPSRSCSVIEDDGLQAAFTTAHELGHVFNMPHDDAKQCASLNGVNQDSHMMASMLSNLDHSQPWSPCSAYMITSFLDNGHGECLMDKPQNPIQLPGDLPGTSYDANRQCQFTFGEDSKHCPDAASTCSTLWCTGTSGGVLVCQTKHFPWADGTSCGEGKWCINGKCVNKTDRKHFDTPFHGSWGMWGPWGDCSRTCGGGVQYTMRECDNPVPKNGGKYCEGKRVRYRSCNLEDCPDNNGKTFREEQCEAHNEFSKASFGSGPAVEWIPKYAGVSPKDRCKLICQAKGIGYFFVLQPKVVDGTPCSPDSTSVCVQGQCVKAGCDRIIDSKKKFDKCGVCGGNGSTCKKISGSVTSAKPGYHDIITIPTGATNIEVKQRNQRGSRNNGSFLAIKAADGTYILNGDYTLSTLEQDIMYKGVVLRYSGSSAALERIRSFSPLKEPLTIQVLTVGNALRPKIKYTYFVKKKKESFNAIPTFSAWVIEEWGECSKSCELGWQRRLVECRDINGQPASECAKEVKPASTRPCADHPCPQWQLGEWSSCSKTCGKGYKKRSLKCLSHDGGVLSHESCDPLKKPKHFIDFCTMAECS.

Disordered stretches follow at residues 1–27 (MQRA…APGS) and 192–250 (GDVG…SIRK). Residues 1-49 (MQRAVPEGFGRRKLGSDMGNAERAPGSRSFGPVPTLLLLAAALLAVSDA) form the signal peptide. A propeptide spanning residues 50–252 (LGRPSEEDEE…TGTGSIRKKR (203 aa)) is cleaved from the precursor. The Cysteine switch signature appears at 196–203 (GTCGVVDD). Residue cysteine 198 coordinates Zn(2+). Basic and acidic residues predominate over residues 203–212 (DEPRPTGKAE). The span at 213–226 (TEDEDEGTEGEDEG) shows a compositional bias: acidic residues. The Peptidase M12B domain occupies 258–467 (RYVETMLVAD…GHGECLMDKP (210 aa)). Ca(2+) is bound by residues glutamate 261, aspartate 344, and aspartate 351. Disulfide bonds link cysteine 333–cysteine 385, cysteine 362–cysteine 367, cysteine 379–cysteine 462, and cysteine 417–cysteine 446. Histidine 401 provides a ligand contact to Zn(2+). Glutamate 402 is a catalytic residue. The Zn(2+) site is built by histidine 405 and histidine 411. Residues cysteine 462 and aspartate 465 each contribute to the Ca(2+) site. The region spanning 476-559 (DLPGTSYDAN…DRKHFDTPFH (84 aa)) is the Disintegrin domain. Cystine bridges form between cysteine 488–cysteine 511, cysteine 499–cysteine 521, cysteine 506–cysteine 540, and cysteine 534–cysteine 545. Asparagine 547 is a glycosylation site (N-linked (GlcNAc...) asparagine). One can recognise a TSP type-1 1 domain in the interval 559 to 614 (HGSWGMWGPWGDCSRTCGGGVQYTMRECDNPVPKNGGKYCEGKRVRYRSCNLEDCP). 3 disulfides stabilise this stretch: cysteine 571/cysteine 608, cysteine 575/cysteine 613, and cysteine 586/cysteine 598. Asparagine 720 and asparagine 764 each carry an N-linked (GlcNAc...) asparagine glycan. Residues 725-849 (KKISGSVTSA…YFVKKKKESF (125 aa)) are spacer. TSP type-1 domains follow at residues 854–905 (TFSA…RPCA) and 908–967 (PCPQ…AECS).

It depends on Zn(2+) as a cofactor. Post-translationally, the precursor is cleaved by a furin endopeptidase. Glycosylated. Can be O-fucosylated by POFUT2 on a serine or a threonine residue found within the consensus sequence C1-X(2)-(S/T)-C2-G of the TSP type-1 repeat domains where C1 and C2 are the first and second cysteine residue of the repeat, respectively. Fucosylated repeats can then be further glycosylated by the addition of a beta-1,3-glucose residue by the glucosyltransferase, B3GALTL. Fucosylation mediates the efficient secretion of ADAMTS family members. Can also be C-glycosylated with one or two mannose molecules on tryptophan residues within the consensus sequence W-X-X-W of the TPRs, and N-glycosylated. These other glycosylations can also facilitate secretion.

The protein resides in the secreted. It is found in the extracellular space. The protein localises to the extracellular matrix. Functionally, metalloprotease which cleaves aggrecan, a cartilage proteoglycan, at the '1938-Glu-|-Leu-1939' site (within the chondroitin sulfate attachment domain), and may be involved in its turnover. Also cleaves COMP. Has angiogenic inhibitor activity. May play a critical role in follicular rupture. In Homo sapiens (Human), this protein is A disintegrin and metalloproteinase with thrombospondin motifs 1 (ADAMTS1).